The sequence spans 436 residues: Drebrin-like protein (436 aa).

One can recognise an ADF-H domain in the interval 2 to 133 (AVNLSRNGPA…EPECIMEKVA (132 aa)). Phosphothreonine is present on threonine 26. Residue serine 160 is modified to Phosphoserine. N6-acetyllysine is present on lysine 176. Positions 178 to 232 (NFWAKAEKEEENRRLEEKRRAEEEKQRLEEERRERELQEAARREQRYQEQHRSAG) form a coiled coil. Composition is skewed to basic and acidic residues over residues 185–229 (KEEE…EQHR) and 264–275 (HPREIFKQKERA). The tract at residues 185 to 371 (KEEENRRLEE…GSGHIDNYMQ (187 aa)) is disordered. Residues 276 to 286 (MSTTSVSSSQP) show a composition bias toward polar residues. Residues serine 277, serine 280, serine 283, and serine 291 each carry the phosphoserine modification. Lysine 296 is modified (N6-acetyllysine). The residue at position 299 (threonine 299) is a Phosphothreonine. Position 311 is a phosphoserine (serine 311). Phosphotyrosine is present on residues tyrosine 340 and tyrosine 350. The SH3 domain maps to 377–436 (GQGLCARALYDYQAADDTEISFDPENLITGIEVIDEGWWRGYGPDGHFGMFPANYVELIE).

The protein belongs to the ABP1 family. In terms of assembly, interacts with FGD1, MAP4K1 and PRAM1. Interacts with ANKRD54. Interacts with WASL and WIPF1. Interacts with SHANK2 and SHANK3. Interacts with both COBL and PACSIN1. Interacts with DNM1 and SYN1. In terms of tissue distribution, detected in brain (at protein level). Widely expressed in brain with highest levels in hippocampus and cerebral cortex. Located primarily in dendrites and, in moderate amounts, in cell bodies. Isoform 1 and isoform 3 are the predominant isoforms in brain.

The protein localises to the cytoplasm. Its subcellular location is the cytoskeleton. It localises to the cell projection. It is found in the lamellipodium. The protein resides in the ruffle. The protein localises to the cell cortex. Its subcellular location is the cytosol. It localises to the cell membrane. It is found in the synapse. The protein resides in the perikaryon. The protein localises to the neuron projection. Its subcellular location is the dendrite. It localises to the postsynaptic density. It is found in the golgi apparatus membrane. The protein resides in the cytoplasmic vesicle. The protein localises to the clathrin-coated vesicle membrane. Its subcellular location is the podosome. It localises to the early endosome. Adapter protein that binds F-actin and DNM1, and thereby plays a role in receptor-mediated endocytosis. Required for the formation of organized podosome rosettes. May act as a common effector of antigen receptor-signaling pathways in leukocytes. Acts as a key component of the immunological synapse that regulates T-cell activation by bridging TCRs and the actin cytoskeleton to gene activation and endocytic processes. Plays a role in the reorganization of the actin cytoskeleton, formation of cell projections, such as neurites, in neuron morphogenesis and synapse formation via its interaction with WASL and COBL. Does not bind G-actin and promote actin polymerization by itself. This Rattus norvegicus (Rat) protein is Drebrin-like protein.